We begin with the raw amino-acid sequence, 433 residues long: Aspartate--tRNA(Asp/Asn) ligase (433 aa).

An L-aspartate-binding site is contributed by E167. The interval 189-192 is aspartate; the sequence is QLFK. R211 serves as a coordination point for L-aspartate. ATP contacts are provided by residues 211–213, 219–221, and E356; these read RAE and RHL. The Mg(2+) site is built by E356 and S359. Positions 359 and 363 each coordinate L-aspartate. Residue 404-407 participates in ATP binding; it reads GGER.

The protein belongs to the class-II aminoacyl-tRNA synthetase family. Type 2 subfamily. In terms of assembly, homodimer. Mg(2+) serves as cofactor.

Its subcellular location is the cytoplasm. The catalysed reaction is tRNA(Asx) + L-aspartate + ATP = L-aspartyl-tRNA(Asx) + AMP + diphosphate. Its function is as follows. Aspartyl-tRNA synthetase with relaxed tRNA specificity since it is able to aspartylate not only its cognate tRNA(Asp) but also tRNA(Asn). Reaction proceeds in two steps: L-aspartate is first activated by ATP to form Asp-AMP and then transferred to the acceptor end of tRNA(Asp/Asn). In Natronomonas pharaonis (strain ATCC 35678 / DSM 2160 / CIP 103997 / JCM 8858 / NBRC 14720 / NCIMB 2260 / Gabara) (Halobacterium pharaonis), this protein is Aspartate--tRNA(Asp/Asn) ligase.